The primary structure comprises 662 residues: tRNA 5-methylaminomethyl-2-thiouridine biosynthesis bifunctional protein MnmC (662 aa).

Residues 1–245 (MKQNAIQPAN…KREMLTGEMA (245 aa)) are tRNA (mnm(5)s(2)U34)-methyltransferase. The segment at 270-662 (IGGGIASALL…RKLLKGKAVK (393 aa)) is FAD-dependent cmnm(5)s(2)U34 oxidoreductase.

It in the N-terminal section; belongs to the methyltransferase superfamily. tRNA (mnm(5)s(2)U34)-methyltransferase family. The protein in the C-terminal section; belongs to the DAO family. It depends on FAD as a cofactor.

The protein localises to the cytoplasm. It catalyses the reaction 5-aminomethyl-2-thiouridine(34) in tRNA + S-adenosyl-L-methionine = 5-methylaminomethyl-2-thiouridine(34) in tRNA + S-adenosyl-L-homocysteine + H(+). Catalyzes the last two steps in the biosynthesis of 5-methylaminomethyl-2-thiouridine (mnm(5)s(2)U) at the wobble position (U34) in tRNA. Catalyzes the FAD-dependent demodification of cmnm(5)s(2)U34 to nm(5)s(2)U34, followed by the transfer of a methyl group from S-adenosyl-L-methionine to nm(5)s(2)U34, to form mnm(5)s(2)U34. The protein is tRNA 5-methylaminomethyl-2-thiouridine biosynthesis bifunctional protein MnmC of Klebsiella pneumoniae subsp. pneumoniae (strain ATCC 700721 / MGH 78578).